The chain runs to 303 residues: Peptidyl-prolyl isomerase CWC27 (303 aa).

A PPIase cyclophilin-type domain is found at A7 to G153. 2 disordered regions span residues S155 to D195 and E208 to A274.

Belongs to the cyclophilin-type PPIase family. CWC27 subfamily. In terms of assembly, associated with the spliceosome.

It localises to the cytoplasm. The protein resides in the nucleus. The enzyme catalyses [protein]-peptidylproline (omega=180) = [protein]-peptidylproline (omega=0). Its function is as follows. PPIases accelerate the folding of proteins. It catalyzes the cis-trans isomerization of proline imidic peptide bonds in oligopeptides. Involved in pre-mRNA splicing. In Eremothecium gossypii (strain ATCC 10895 / CBS 109.51 / FGSC 9923 / NRRL Y-1056) (Yeast), this protein is Peptidyl-prolyl isomerase CWC27 (CWC27).